A 583-amino-acid chain; its full sequence is NEDD4-binding protein 2-like 2 (583 aa).

Positions 162 to 197 (NSEKSEIDNELFQFYKEIEELEKEKDGFENSCKESE) form a coiled coil. The segment at 549–575 (EPSHKSTQRPPPPQGRQRWGGSLGSHN) is disordered.

In Homo sapiens (Human), this protein is NEDD4-binding protein 2-like 2 (N4BP2L2).